Reading from the N-terminus, the 295-residue chain is MFKSGFITVIGRPNVGKSTLLNNIMKEKLSIVSHKPQTTRNNIQTILTQEDCQIVFVDTPGMHKPKHKLGEYMVKVAEEALKGVDIVLFMTTPEGQLGRGDVYILEQLKRIKQPVFLIVNKIDENDQGKVAETLKNYHDAYPFFKEIIPISASKDKNVDTLLELMKKYLPEGPKYYPEDMITDQQERFIVAEIIREKALRLLSEEVPHGIAVEMMTMKKNEKGNYEINATMLCERDSHKGIIIGKNGSMLKKISQYARQDIEKFLQSKVSLKVWVKVKKEWRDDNRILKELGYRQ.

The region spanning 3–171 (KSGFITVIGR…LELMKKYLPE (169 aa)) is the Era-type G domain. Positions 11–18 (GRPNVGKS) are G1. Residue 11-18 (GRPNVGKS) coordinates GTP. Residues 37–41 (QTTRN) form a G2 region. The tract at residues 58–61 (DTPG) is G3. Residues 58 to 62 (DTPGM) and 120 to 123 (NKID) contribute to the GTP site. The segment at 120–123 (NKID) is G4. Residues 150–152 (ISA) are G5. Residues 202–279 (LSEEVPHGIA…SLKVWVKVKK (78 aa)) form the KH type-2 domain.

The protein belongs to the TRAFAC class TrmE-Era-EngA-EngB-Septin-like GTPase superfamily. Era GTPase family. As to quaternary structure, monomer.

It is found in the cytoplasm. The protein localises to the cell membrane. Functionally, an essential GTPase that binds both GDP and GTP, with rapid nucleotide exchange. Plays a role in 16S rRNA processing and 30S ribosomal subunit biogenesis and possibly also in cell cycle regulation and energy metabolism. The chain is GTPase Era from Clostridium tetani (strain Massachusetts / E88).